We begin with the raw amino-acid sequence, 613 residues long: Pescadillo homolog (613 aa).

The stretch at K259 to X344 forms a coiled coil. Positions K268–N333 are disordered. Positions E278–N333 are enriched in basic and acidic residues. The region spanning S350–I453 is the BRCT domain. The interval L485 to S517 is disordered. A coiled-coil region spans residues N492–K601. The segment covering K497–D511 has biased composition (low complexity).

Belongs to the pescadillo family.

The protein localises to the nucleus. The protein resides in the nucleolus. It localises to the nucleoplasm. In terms of biological role, required for maturation of ribosomal RNAs and formation of the large ribosomal subunit. The protein is Pescadillo homolog of Plasmodium yoelii yoelii.